We begin with the raw amino-acid sequence, 240 residues long: Protein FANTASTIC FOUR 2 (240 aa).

2 disordered regions span residues 89–124 (TTPRAPPRQLKPQEDTNLPDKTPPMSRNNSFPPPIK) and 177–229 (LLSH…KPML). The FAF domain occupies 117–171 (NSFPPPIKFVEDSKYNRMVRWLGEDGRIVVQAIRVSSPPSCFVSERGEGRLRLIL). Over residues 184 to 200 (EEEEEETEEGIDEETSE) the composition is skewed to acidic residues. Over residues 207–216 (GNKKFSRFSR) the composition is skewed to basic residues. Positions 217–226 (RCKENGREPK) are enriched in basic and acidic residues.

This sequence belongs to the fantastic four family. As to expression, expressed in the shoot apex, stamens, carpels and young siliques. Detected in provascular and vascular tissue, and in the center of the vegetative and inflorescence meristems. Expressed in the funiculus. In roots and leaves, predominantly expressed in phloem.

Regulates the size of the shoot meristem by modulating the CLV3-WUS feedback loop. Can repress WUS but is under negative control by CLV3. The chain is Protein FANTASTIC FOUR 2 (FAF2) from Arabidopsis thaliana (Mouse-ear cress).